The sequence spans 123 residues: Glycine cleavage system H protein (123 aa).

The 82-residue stretch at 23-104 folds into the Lipoyl-binding domain; sequence HWLAGITDHA…PYDAWIFSFE (82 aa). Lys64 carries the post-translational modification N6-lipoyllysine.

The protein belongs to the GcvH family. As to quaternary structure, the glycine cleavage system is composed of four proteins: P, T, L and H. The cofactor is (R)-lipoate.

Its function is as follows. The glycine cleavage system catalyzes the degradation of glycine. The H protein shuttles the methylamine group of glycine from the P protein to the T protein. The polypeptide is Glycine cleavage system H protein (Methylobacillus flagellatus (strain ATCC 51484 / DSM 6875 / VKM B-1610 / KT)).